We begin with the raw amino-acid sequence, 456 residues long: Adenylosuccinate synthetase isozyme 2 (456 aa).

Positions 1-24 are disordered; the sequence is MAFAETYPAASSLPNGDCGRPRAR. Residues 39 to 45 and 67 to 69 contribute to the GTP site; these read GDEGKGK and GHT. Asp40 acts as the Proton acceptor in catalysis. Residues Asp40 and Gly67 each coordinate Mg(2+). Substrate is bound at residue Asp40. IMP contacts are provided by residues 40–43, 65–68, Thr162, Arg176, Asn255, Thr270, and Arg334; these read DEGK and NAGH. His68 (proton donor) is an active-site residue. 330–336 is a substrate binding site; it reads VTTGRKR. Residues Arg336, 362 to 364, and 444 to 447 contribute to the GTP site; these read KLD and GVGK.

This sequence belongs to the adenylosuccinate synthetase family. In terms of assembly, homodimer. The cofactor is Mg(2+).

It is found in the cytoplasm. The protein localises to the mitochondrion. The enzyme catalyses IMP + L-aspartate + GTP = N(6)-(1,2-dicarboxyethyl)-AMP + GDP + phosphate + 2 H(+). Its pathway is purine metabolism; AMP biosynthesis via de novo pathway; AMP from IMP: step 1/2. With respect to regulation, inhibited competitively by AMP and IMP and non-competitively by fructose 1,6-bisphosphate. Plays an important role in the de novo pathway and in the salvage pathway of purine nucleotide biosynthesis. Catalyzes the first committed step in the biosynthesis of AMP from IMP. In Homo sapiens (Human), this protein is Adenylosuccinate synthetase isozyme 2.